The chain runs to 261 residues: HLA class II histocompatibility antigen, DQ beta 1 chain (261 aa).

The first 32 residues, 1–32, serve as a signal peptide directing secretion; that stretch reads MSWKKALRIPGGLRAATVTLMLAMLSTPVAEG. Positions 33–126 are beta-1; it reads RDSPEDFVYQ…LELRTTLQRR (94 aa). Residues 33 to 230 are Extracellular-facing; sequence RDSPEDFVYQ…RAQSESAQSK (198 aa). 2 cysteine pairs are disulfide-bonded: cysteine 47/cysteine 111 and cysteine 149/cysteine 205. The N-linked (GlcNAc...) asparagine glycan is linked to asparagine 51. The tract at residues 127 to 220 is beta-2; the sequence is VEPTVTISPS…SLQNPITVEW (94 aa). One can recognise an Ig-like C1-type domain in the interval 129 to 217; sequence PTVTISPSRT…EHPSLQNPIT (89 aa). Residues 221–230 form a connecting peptide region; sequence RAQSESAQSK. The chain crosses the membrane as a helical span at residues 231–251; the sequence is MLSGIGGFVLGLIFLGLGLII. At 252 to 261 the chain is on the cytoplasmic side; that stretch reads HHRSQKGLLH.

Belongs to the MHC class II family. In terms of assembly, heterodimer of an alpha and a beta subunit; also referred as MHC class II molecule. In the endoplasmic reticulum (ER) it forms a heterononamer; 3 MHC class II molecules bind to a CD74 homotrimer (also known as invariant chain or HLA class II histocompatibility antigen gamma chain). In the endosomal/lysosomal system; CD74 undergoes sequential degradation by various proteases; leaving a small fragment termed CLIP on each MHC class II molecule. MHC class II molecule interacts with HLA_DM, and HLA_DO in B-cells, in order to release CLIP and facilitate the binding of antigenic peptides.

The protein localises to the cell membrane. It localises to the endoplasmic reticulum membrane. It is found in the golgi apparatus. The protein resides in the trans-Golgi network membrane. Its subcellular location is the endosome membrane. The protein localises to the lysosome membrane. Functionally, binds peptides derived from antigens that access the endocytic route of antigen presenting cells (APC) and presents them on the cell surface for recognition by the CD4 T-cells. The peptide binding cleft accommodates peptides of 10-30 residues. The peptides presented by MHC class II molecules are generated mostly by degradation of proteins that access the endocytic route, where they are processed by lysosomal proteases and other hydrolases. Exogenous antigens that have been endocytosed by the APC are thus readily available for presentation via MHC II molecules, and for this reason this antigen presentation pathway is usually referred to as exogenous. As membrane proteins on their way to degradation in lysosomes as part of their normal turn-over are also contained in the endosomal/lysosomal compartments, exogenous antigens must compete with those derived from endogenous components. Autophagy is also a source of endogenous peptides, autophagosomes constitutively fuse with MHC class II loading compartments. In addition to APCs, other cells of the gastrointestinal tract, such as epithelial cells, express MHC class II molecules and CD74 and act as APCs, which is an unusual trait of the GI tract. To produce a MHC class II molecule that presents an antigen, three MHC class II molecules (heterodimers of an alpha and a beta chain) associate with a CD74 trimer in the ER to form a heterononamer. Soon after the entry of this complex into the endosomal/lysosomal system where antigen processing occurs, CD74 undergoes a sequential degradation by various proteases, including CTSS and CTSL, leaving a small fragment termed CLIP (class-II-associated invariant chain peptide). The removal of CLIP is facilitated by HLA-DM via direct binding to the alpha-beta-CLIP complex so that CLIP is released. HLA-DM stabilizes MHC class II molecules until primary high affinity antigenic peptides are bound. The MHC II molecule bound to a peptide is then transported to the cell membrane surface. In B-cells, the interaction between HLA-DM and MHC class II molecules is regulated by HLA-DO. Primary dendritic cells (DCs) also to express HLA-DO. Lysosomal microenvironment has been implicated in the regulation of antigen loading into MHC II molecules, increased acidification produces increased proteolysis and efficient peptide loading. The polypeptide is HLA class II histocompatibility antigen, DQ beta 1 chain (HLA-DQB1) (Homo sapiens (Human)).